Consider the following 257-residue polypeptide: Trans-aconitate 2-methyltransferase (257 aa).

Belongs to the methyltransferase superfamily. Tam family.

The protein localises to the cytoplasm. It carries out the reaction trans-aconitate + S-adenosyl-L-methionine = (E)-3-(methoxycarbonyl)pent-2-enedioate + S-adenosyl-L-homocysteine. In terms of biological role, catalyzes the S-adenosylmethionine monomethyl esterification of trans-aconitate. This chain is Trans-aconitate 2-methyltransferase, found in Sinorhizobium fredii (strain NBRC 101917 / NGR234).